Reading from the N-terminus, the 219-residue chain is Claudin-20 (219 aa).

Topologically, residues 1 to 7 (MASAGLQ) are cytoplasmic. A helical membrane pass occupies residues 8 to 28 (LLAFILALSGVSGVLTATLLP). Over 29–81 (NWKVNVDVDSNIITAIVQLHGLWMDCTWYSTGMFSCALKHSILSLPIHVQAAR) the chain is Extracellular. Residues 82–102 (ATMVLACVLSALGICTSTVGM) form a helical membrane-spanning segment. Over 103–118 (KCTRLGGDRETKSHAS) the chain is Cytoplasmic. The helical transmembrane segment at 119–139 (FAGGVCFMSAGISSLISTVWY) threads the bilayer. Topologically, residues 140-160 (TKEIIANFLDLTVPESNKHEP) are extracellular. A helical transmembrane segment spans residues 161–181 (GGAIYIGFISAMLLFISGMIF). Topologically, residues 182–219 (CTSCIKRNPEARLDPPTQQPISNTQLENNSTHNLKDYV) are cytoplasmic. The interval 193 to 219 (RLDPPTQQPISNTQLENNSTHNLKDYV) is disordered. The segment covering 200–213 (QPISNTQLENNSTH) has biased composition (polar residues).

This sequence belongs to the claudin family.

The protein resides in the cell junction. The protein localises to the tight junction. Its subcellular location is the cell membrane. Plays a major role in tight junction-specific obliteration of the intercellular space, through calcium-independent cell-adhesion activity. This Homo sapiens (Human) protein is Claudin-20 (CLDN20).